Reading from the N-terminus, the 98-residue chain is Pore-forming peptide amoebapore A (98 aa).

A signal peptide spans 1–21; the sequence is MKAIVFVLIFAVAFAVTATHQ. One can recognise a Saposin B-type domain in the interval 22 to 98; it reads GEILCNLCTG…NAICAKIHAC (77 aa). 3 disulfides stabilise this stretch: cysteine 26/cysteine 98, cysteine 29/cysteine 92, and cysteine 56/cysteine 67.

As to quaternary structure, monomer (at pH below 4 and pH above 6). Homodimer (at pH 4-6). Hexamer; formed during insertion in the membrane.

It localises to the cytoplasmic granule. In terms of biological role, forms pores in the cell membrane of host cells. Has antibacterial activity against M.luteus, no activity against E.coli. Implicated in the cytolytic activity of the parasite. In Entamoeba histolytica (strain ATCC 30459 / HM-1:IMSS / ABRM), this protein is Pore-forming peptide amoebapore A.